Here is a 238-residue protein sequence, read N- to C-terminus: Flagellar L-ring protein (238 aa).

Residues 1-16 (MNKAILAVAMVLLLAG) form the signal peptide. Cys-17 carries N-palmitoyl cysteine lipidation. Cys-17 carries S-diacylglycerol cysteine lipidation.

It belongs to the FlgH family. As to quaternary structure, the basal body constitutes a major portion of the flagellar organelle and consists of four rings (L,P,S, and M) mounted on a central rod.

The protein resides in the cell outer membrane. The protein localises to the bacterial flagellum basal body. In terms of biological role, assembles around the rod to form the L-ring and probably protects the motor/basal body from shearing forces during rotation. The protein is Flagellar L-ring protein of Brucella abortus (strain 2308).